The sequence spans 342 residues: Global transcription regulator FGP1 (342 aa).

Residues 91-113 (FSPGEKKRASKKPKKQAGVAKAY) are disordered.

The protein belongs to the MIT1/WOR1 family.

The protein resides in the nucleus. Global transcriptional regulator of pathogenicity. Regulates many genes during growth in putrescine medium and during infection. Involved in the developmental processes of conidium formation and sexual reproduction and modulates a morphological change that accompanies mycotoxin production. The protein is Global transcription regulator FGP1 of Gibberella zeae (strain ATCC MYA-4620 / CBS 123657 / FGSC 9075 / NRRL 31084 / PH-1) (Wheat head blight fungus).